Consider the following 690-residue polypeptide: DNA ligase (690 aa).

Residues 43–47, 92–93, and Glu129 contribute to the NAD(+) site; these read DAEYD and SI. Lys131 (N6-AMP-lysine intermediate) is an active-site residue. Arg152, Glu188, Lys309, and Lys333 together coordinate NAD(+). The Zn(2+) site is built by Cys427, Cys430, Cys445, and Cys451. Residues 610–690 enclose the BRCT domain; sequence VTPTPLSGKT…GLKELLDGHS (81 aa).

This sequence belongs to the NAD-dependent DNA ligase family. LigA subfamily. Requires Mg(2+) as cofactor. Mn(2+) is required as a cofactor.

It carries out the reaction NAD(+) + (deoxyribonucleotide)n-3'-hydroxyl + 5'-phospho-(deoxyribonucleotide)m = (deoxyribonucleotide)n+m + AMP + beta-nicotinamide D-nucleotide.. In terms of biological role, DNA ligase that catalyzes the formation of phosphodiester linkages between 5'-phosphoryl and 3'-hydroxyl groups in double-stranded DNA using NAD as a coenzyme and as the energy source for the reaction. It is essential for DNA replication and repair of damaged DNA. This is DNA ligase from Albidiferax ferrireducens (strain ATCC BAA-621 / DSM 15236 / T118) (Rhodoferax ferrireducens).